The chain runs to 255 residues: Ribosomal RNA small subunit methyltransferase G (255 aa).

Residues 1 to 44 form a disordered region; the sequence is MSSPGRPKGEYRSAQHAGAVAGPPGRPDGEHRGSSGADPNGRLR. S-adenosyl-L-methionine-binding positions include Gly118, Leu123, 169-170, and Arg183; that span reads VE.

This sequence belongs to the methyltransferase superfamily. RNA methyltransferase RsmG family.

The protein resides in the cytoplasm. It carries out the reaction guanosine(527) in 16S rRNA + S-adenosyl-L-methionine = N(7)-methylguanosine(527) in 16S rRNA + S-adenosyl-L-homocysteine. Functionally, specifically methylates the N7 position of guanine in position 527 of 16S rRNA. This chain is Ribosomal RNA small subunit methyltransferase G, found in Bordetella petrii (strain ATCC BAA-461 / DSM 12804 / CCUG 43448).